Here is a 291-residue protein sequence, read N- to C-terminus: Protease HtpX homolog (291 aa).

Helical transmembrane passes span Val-4–Ile-24 and Met-38–Leu-58. Residue His-144 participates in Zn(2+) binding. Residue Glu-145 is part of the active site. His-148 lines the Zn(2+) pocket. 2 helical membrane-spanning segments follow: residues Leu-159–Val-179 and Ile-199–Phe-219. Zn(2+) is bound at residue Glu-224.

The protein belongs to the peptidase M48B family. Requires Zn(2+) as cofactor.

The protein localises to the cell inner membrane. This Pelodictyon phaeoclathratiforme (strain DSM 5477 / BU-1) protein is Protease HtpX homolog.